The chain runs to 183 residues: Large ribosomal subunit protein uL6 (183 aa).

Belongs to the universal ribosomal protein uL6 family. In terms of assembly, part of the 50S ribosomal subunit.

Its function is as follows. This protein binds to the 23S rRNA, and is important in its secondary structure. It is located near the subunit interface in the base of the L7/L12 stalk, and near the tRNA binding site of the peptidyltransferase center. In Chlamydia abortus (strain DSM 27085 / S26/3) (Chlamydophila abortus), this protein is Large ribosomal subunit protein uL6.